Consider the following 337-residue polypeptide: Endochitinase 37 (337 aa).

A signal peptide spans 1–25 (MTRLLDASFLLLPVIASTLFGTASA). The region spanning 38–337 (KVLQGYWENW…GSKNWTFGDN (300 aa)) is the GH18 domain. Glutamate 160 serves as the catalytic Proton donor. Asparagine 331 carries N-linked (GlcNAc...) asparagine glycosylation.

This sequence belongs to the glycosyl hydrolase 18 family. Chitinase class V subfamily. Monomer.

It localises to the secreted. The catalysed reaction is Random endo-hydrolysis of N-acetyl-beta-D-glucosaminide (1-&gt;4)-beta-linkages in chitin and chitodextrins.. Functionally, secreted chitinase involved in the degradation of chitin, a component of the cell walls of fungi and exoskeletal elements of some animals (including worms and arthropods). Plays a morphogenetic role during apical growth, cell division and differentiation (cell wall morphogenesis). May be involved in the degradation and further assimilation of phytopathogenic fungi, namely mycoparasitism, the major mechanism accounting for the antagonistic activity against phytopathogenic fungi displayed by Trichoderma. This chain is Endochitinase 37 (chit37), found in Trichoderma harzianum (Hypocrea lixii).